The primary structure comprises 308 residues: UDP-N-acetylenolpyruvoylglucosamine reductase (308 aa).

The region spanning 22-185 is the FAD-binding PCMH-type domain; that stretch reads RVGGPADWLF…TEATFRAEAG (164 aa). Arg-165 is a catalytic residue. Residues 197-211 show a composition bias toward basic and acidic residues; it reads QIARRDSSQPTKERS. A disordered region spans residues 197-228; sequence QIARRDSSQPTKERSAGSTFRNPAGFSSTGRA. Polar residues predominate over residues 212-226; it reads AGSTFRNPAGFSSTG. The Proton donor role is filled by Ser-214. Glu-296 is an active-site residue.

Belongs to the MurB family. FAD serves as cofactor.

It localises to the cytoplasm. It catalyses the reaction UDP-N-acetyl-alpha-D-muramate + NADP(+) = UDP-N-acetyl-3-O-(1-carboxyvinyl)-alpha-D-glucosamine + NADPH + H(+). Its pathway is cell wall biogenesis; peptidoglycan biosynthesis. Functionally, cell wall formation. This chain is UDP-N-acetylenolpyruvoylglucosamine reductase, found in Cereibacter sphaeroides (strain ATCC 17029 / ATH 2.4.9) (Rhodobacter sphaeroides).